A 123-amino-acid chain; its full sequence is Major pollen allergen Ole e 10 (123 aa).

The N-terminal stretch at 1-21 is a signal peptide; it reads MRGTAGVPDQPVPTPTPSVPT. Residues 1–37 form a disordered region; sequence MRGTAGVPDQPVPTPTPSVPTSSSPVPKPPTQGNKKW. Cys38 and Cys101 are joined by a disulfide.

The N-terminus is blocked. Post-translationally, phosphorylated at Ser-24 when expressed as a recombinant protein in a heterologous system. In terms of processing, not glycosylated. Contains two additional disulfide bonds. As to expression, expressed in mature and germinating pollen.

Its subcellular location is the cytoplasmic vesicle. Carbohydrate-binding protein binding preferentially 1,3-beta-glucans. May be involved in pollen tube wall re-formation during germination. The sequence is that of Major pollen allergen Ole e 10 from Olea europaea (Common olive).